The primary structure comprises 431 residues: uncharacterized protein (431 aa).

3 disordered regions span residues 31 to 55 (VPAS…QAGV), 257 to 291 (QNGG…PKQD), and 365 to 431 (FQSP…HRKA). Polar residues predominate over residues 42 to 55 (VSASQPNGAHQAGV). Residues 412-425 (VEYRRGRSLRESRE) show a composition bias toward basic and acidic residues.

This is an uncharacterized protein from Arabidopsis thaliana (Mouse-ear cress).